The chain runs to 427 residues: Tol-Pal system protein TolB (427 aa).

The first 23 residues, 1–23, serve as a signal peptide directing secretion; sequence MKLLKRLVSVFAIVLAVGSNAFA.

The protein belongs to the TolB family. In terms of assembly, the Tol-Pal system is composed of five core proteins: the inner membrane proteins TolA, TolQ and TolR, the periplasmic protein TolB and the outer membrane protein Pal. They form a network linking the inner and outer membranes and the peptidoglycan layer.

It is found in the periplasm. Its function is as follows. Part of the Tol-Pal system, which plays a role in outer membrane invagination during cell division and is important for maintaining outer membrane integrity. The protein is Tol-Pal system protein TolB of Haemophilus influenzae (strain PittGG).